The following is a 325-amino-acid chain: Eukaryotic translation initiation factor 3 subunit I (325 aa).

WD repeat units lie at residues 8–47 (GHER…RLGT), 50–91 (GHTG…ALLK), 144–183 (CNDS…VLVN), and 186–225 (EHSR…HQKT). Threonine 219 bears the Phosphothreonine mark. Lysine 264 carries the post-translational modification N6-acetyllysine. Lysine 282 participates in a covalent cross-link: Glycyl lysine isopeptide (Lys-Gly) (interchain with G-Cter in ubiquitin). The stretch at 283 to 324 (GHFGPINSVAFHPDGKSYSSGGEDGYVRIHYFDPQYFEFEFE) is one WD 5 repeat. Position 308 is a phosphotyrosine (tyrosine 308).

Belongs to the eIF-3 subunit I family. As to quaternary structure, component of the eukaryotic translation initiation factor 3 (eIF-3) complex, which is composed of 13 subunits: EIF3A, EIF3B, EIF3C, EIF3D, EIF3E, EIF3F, EIF3G, EIF3H, EIF3I, EIF3J, EIF3K, EIF3L and EIF3M. The eIF-3 complex appears to include 3 stable modules: module A is composed of EIF3A, EIF3B, EIF3G and EIF3I; module B is composed of EIF3F, EIF3H, and EIF3M; and module C is composed of EIF3C, EIF3D, EIF3E, EIF3K and EIF3L. EIF3C of module C binds EIF3B of module A and EIF3H of module B, thereby linking the three modules. EIF3J is a labile subunit that binds to the eIF-3 complex via EIF3B. The eIF-3 complex interacts with RPS6KB1 under conditions of nutrient depletion. Mitogenic stimulation leads to binding and activation of a complex composed of MTOR and RPTOR, leading to phosphorylation and release of RPS6KB1 and binding of EIF4B to eIF-3. Phosphorylated by TGF-beta type II receptor.

It is found in the cytoplasm. Its function is as follows. Component of the eukaryotic translation initiation factor 3 (eIF-3) complex, which is required for several steps in the initiation of protein synthesis. The eIF-3 complex associates with the 40S ribosome and facilitates the recruitment of eIF-1, eIF-1A, eIF-2:GTP:methionyl-tRNAi and eIF-5 to form the 43S pre-initiation complex (43S PIC). The eIF-3 complex stimulates mRNA recruitment to the 43S PIC and scanning of the mRNA for AUG recognition. The eIF-3 complex is also required for disassembly and recycling of post-termination ribosomal complexes and subsequently prevents premature joining of the 40S and 60S ribosomal subunits prior to initiation. The eIF-3 complex specifically targets and initiates translation of a subset of mRNAs involved in cell proliferation, including cell cycling, differentiation and apoptosis, and uses different modes of RNA stem-loop binding to exert either translational activation or repression. This is Eukaryotic translation initiation factor 3 subunit I from Bos taurus (Bovine).